We begin with the raw amino-acid sequence, 245 residues long: tRNA1(Val) (adenine(37)-N6)-methyltransferase (245 aa).

Belongs to the methyltransferase superfamily. tRNA (adenine-N(6)-)-methyltransferase family.

The protein resides in the cytoplasm. The enzyme catalyses adenosine(37) in tRNA1(Val) + S-adenosyl-L-methionine = N(6)-methyladenosine(37) in tRNA1(Val) + S-adenosyl-L-homocysteine + H(+). Specifically methylates the adenine in position 37 of tRNA(1)(Val) (anticodon cmo5UAC). The chain is tRNA1(Val) (adenine(37)-N6)-methyltransferase from Escherichia coli (strain UTI89 / UPEC).